Consider the following 76-residue polypeptide: Large ribosomal subunit protein uL24 (76 aa).

The protein belongs to the universal ribosomal protein uL24 family. Part of the 50S ribosomal subunit.

Its function is as follows. One of two assembly initiator proteins, it binds directly to the 5'-end of the 23S rRNA, where it nucleates assembly of the 50S subunit. Functionally, one of the proteins that surrounds the polypeptide exit tunnel on the outside of the subunit. The sequence is that of Large ribosomal subunit protein uL24 from Wolinella succinogenes (strain ATCC 29543 / DSM 1740 / CCUG 13145 / JCM 31913 / LMG 7466 / NCTC 11488 / FDC 602W) (Vibrio succinogenes).